The following is a 381-amino-acid chain: NF-kappa-B inhibitor-like protein 1 (381 aa).

The tract at residues 1 to 34 (MSNPSPQVPEEEASTSVCRPKSSMASTSRRQRRE) is disordered. 2 ANK repeats span residues 64-93 (GQPPPLHRACARHDAPALCLLLRLGADPAH) and 97-130 (HGDTALHAAARQGPDAYTDFFLPLLSRCPSAMGI). Disordered stretches follow at residues 129 to 167 (GIKNKDGETPGQILGWGPPWDSAEEEEEDDASKEREWRQ) and 186 to 294 (GDAS…RGSL). Ser150 bears the Phosphoserine mark. A compositionally biased stretch (acidic residues) spans 150 to 159 (SAEEEEEDDA). Basic and acidic residues-rich tracts occupy residues 218 to 228 (REAEGSRRPPR) and 238 to 287 (QQEE…EHPR).

Interacts with CACTIN (via N-terminal domain); the interaction occurs in a proinflammatory-independent manner. As to expression, detected in different cell types including monocytes, T-cells, B-cells and hepatocytes.

It is found in the nucleus. Functionally, involved in the regulation of innate immune response. Acts as negative regulator of Toll-like receptor and interferon-regulatory factor (IRF) signaling pathways. Contributes to the negative regulation of transcriptional activation of NF-kappa-B target genes in response to endogenous proinflammatory stimuli. This Homo sapiens (Human) protein is NF-kappa-B inhibitor-like protein 1 (NFKBIL1).